Consider the following 155-residue polypeptide: MRIGLGYDVHKLVENRPLIIGGVTIPHDKGLLGHSDADVLVHAIMDALLGAAALGDIGKHFPDSDKNFKNISSLLLLSKVKDLINKEGYKIVNIDCTIIAQKPKMLYHINAMKKNICKCLKLDNNMLNIKATTEEGLGFTGKEEGISANAICLLD.

A divalent metal cation is bound by residues Asp-8 and His-10. Residues Asp-8–His-10 and His-34–Ser-35 each bind 4-CDP-2-C-methyl-D-erythritol 2-phosphate. A divalent metal cation is bound at residue His-42. 4-CDP-2-C-methyl-D-erythritol 2-phosphate is bound by residues Asp-56–Gly-58, Phe-61–Asp-65, Ala-100–Leu-106, Thr-132–Glu-135, Phe-139, and Lys-142.

Belongs to the IspF family. In terms of assembly, homotrimer. A divalent metal cation is required as a cofactor.

It carries out the reaction 4-CDP-2-C-methyl-D-erythritol 2-phosphate = 2-C-methyl-D-erythritol 2,4-cyclic diphosphate + CMP. The protein operates within isoprenoid biosynthesis; isopentenyl diphosphate biosynthesis via DXP pathway; isopentenyl diphosphate from 1-deoxy-D-xylulose 5-phosphate: step 4/6. Functionally, involved in the biosynthesis of isopentenyl diphosphate (IPP) and dimethylallyl diphosphate (DMAPP), two major building blocks of isoprenoid compounds. Catalyzes the conversion of 4-diphosphocytidyl-2-C-methyl-D-erythritol 2-phosphate (CDP-ME2P) to 2-C-methyl-D-erythritol 2,4-cyclodiphosphate (ME-CPP) with a corresponding release of cytidine 5-monophosphate (CMP). This chain is 2-C-methyl-D-erythritol 2,4-cyclodiphosphate synthase, found in Clostridium botulinum (strain Okra / Type B1).